Reading from the N-terminus, the 447-residue chain is MPAPALPTSAMAVQVPLWHHYLQAIRSREAPRAQDFQRAENVLLTVLERVHALDPRFIVDYSRGLEAFQFALRSSEDPMDMEVPLWVDAEALLIEEPEATQPEDGLELCHLGVPREGAGLERWTTEDTFTASSEGDAKCRGHIVPSKVLCVLKDLLVAAIVHCKHHSLIAPGSLNAASLREEQLHLSLLVSSGWRTISFHVVPVVRRKLGAPALEGVQQMPGFPEGSLRRILSQGVDLVPASAQLWRTSTDYLLTRLLGELGSLQGHRLDSLSILDRVNHESWRDSGQTDGLTFGHLKMVLLWASVLFLAPEDWAELQGAVYRLLVVLLCCLATRKLPHFLHPQRNLLQGSGLDLGAIYQRVEGFASQPEAALRIHATHLGRSPPPRIGSGLKALLQLPASDPTYWATAYFDVLLDKFQVFNIQDKDRISAMQSIFQKTRTLGGEES.

This chain is Protein mab-21-like 4, found in Homo sapiens (Human).